Reading from the N-terminus, the 362-residue chain is 3-dehydroquinate synthase (362 aa).

Residues 71–76 (DGEQYK), 105–109 (GVIGD), 129–130 (TT), Lys142, Lys151, and 169–172 (CLKT) each bind NAD(+). Glu184, His247, and His264 together coordinate Zn(2+).

It belongs to the sugar phosphate cyclases superfamily. Dehydroquinate synthase family. Co(2+) serves as cofactor. The cofactor is Zn(2+). Requires NAD(+) as cofactor.

The protein localises to the cytoplasm. It catalyses the reaction 7-phospho-2-dehydro-3-deoxy-D-arabino-heptonate = 3-dehydroquinate + phosphate. It functions in the pathway metabolic intermediate biosynthesis; chorismate biosynthesis; chorismate from D-erythrose 4-phosphate and phosphoenolpyruvate: step 2/7. Functionally, catalyzes the conversion of 3-deoxy-D-arabino-heptulosonate 7-phosphate (DAHP) to dehydroquinate (DHQ). This is 3-dehydroquinate synthase from Salmonella agona (strain SL483).